A 279-amino-acid polypeptide reads, in one-letter code: Bifunctional protein FolD (279 aa).

NADP(+)-binding positions include 158–160, S183, and I224; that span reads GRS.

It belongs to the tetrahydrofolate dehydrogenase/cyclohydrolase family. Homodimer.

The enzyme catalyses (6R)-5,10-methylene-5,6,7,8-tetrahydrofolate + NADP(+) = (6R)-5,10-methenyltetrahydrofolate + NADPH. The catalysed reaction is (6R)-5,10-methenyltetrahydrofolate + H2O = (6R)-10-formyltetrahydrofolate + H(+). Its pathway is one-carbon metabolism; tetrahydrofolate interconversion. Functionally, catalyzes the oxidation of 5,10-methylenetetrahydrofolate to 5,10-methenyltetrahydrofolate and then the hydrolysis of 5,10-methenyltetrahydrofolate to 10-formyltetrahydrofolate. This Caldicellulosiruptor saccharolyticus (strain ATCC 43494 / DSM 8903 / Tp8T 6331) protein is Bifunctional protein FolD.